Here is a 407-residue protein sequence, read N- to C-terminus: Argininosuccinate synthase (407 aa).

Residues 11–19 and Ala38 each bind ATP; that span reads AYSGGLDTS. The L-citrulline site is built by Tyr91 and Ser96. ATP is bound at residue Gly121. Residues Thr123, Asn127, and Asp128 each coordinate L-aspartate. Asn127 contributes to the L-citrulline binding site. The L-citrulline site is built by Arg131, Ser181, Ser190, Glu266, and Tyr278.

It belongs to the argininosuccinate synthase family. Type 1 subfamily. In terms of assembly, homotetramer.

The protein localises to the cytoplasm. It catalyses the reaction L-citrulline + L-aspartate + ATP = 2-(N(omega)-L-arginino)succinate + AMP + diphosphate + H(+). It functions in the pathway amino-acid biosynthesis; L-arginine biosynthesis; L-arginine from L-ornithine and carbamoyl phosphate: step 2/3. The sequence is that of Argininosuccinate synthase from Campylobacter concisus (strain 13826).